The sequence spans 214 residues: External core antigen (214 aa).

Positions 1 to 19 are cleaved as a signal peptide; the sequence is MQLFHLCLIISCTCPTVQA. The HBEAG stretch occupies residues 25–27; sequence GWL. The disordered stretch occupies residues 165–214; the sequence is NAPILSTLPETTVVRRRDRGRSPRRRTPSPRRRRSPSPRRRRSQSRESQC. The segment covering 178-207 has biased composition (basic residues); sequence VRRRDRGRSPRRRTPSPRRRRSPSPRRRRS. The 1; half-length repeat unit spans residues 186-192; the sequence is SPRRRTP. The segment at 186 to 208 is 3 X 8 AA repeats of S-P-R-R-R-R-S-[PQ]; the sequence is SPRRRTPSPRRRRSPSPRRRRSQ. Positions 186–214 are excised as a propeptide; sequence SPRRRTPSPRRRRSPSPRRRRSQSRESQC. 2 tandem repeats follow at residues 193–200 and 201–208.

The protein belongs to the orthohepadnavirus precore antigen family. Homodimerizes. Phosphorylated. In terms of processing, cleaved by host furin.

It is found in the secreted. It localises to the host nucleus. May regulate immune response to the intracellular capsid in acting as a T-cell tolerogen, by having an immunoregulatory effect which prevents destruction of infected cells by cytotoxic T-cells. This immune regulation may predispose to chronicity during perinatal infections and prevent severe liver injury during adult infections. In Hepatitis B virus genotype A2 subtype adw2 (strain Rutter 1979) (HBV-A), this protein is External core antigen.